Here is a 499-residue protein sequence, read N- to C-terminus: Probable alpha-L-arabinofuranosidase B (499 aa).

The N-terminal stretch at 1–17 (MFSRRNLLALGLAATVS) is a signal peptide. Residues 18 to 335 (AGPCDIYEAG…ENIVAAKYVV (318 aa)) form a catalytic region. 3 disulfides stabilise this stretch: C21–C31, C81–C86, and C176–C177. The N-linked (GlcNAc...) asparagine glycan is linked to N83. The N-linked (GlcNAc...) asparagine glycan is linked to N202. Position 219 (D219) interacts with substrate. Catalysis depends on E221, which acts as the Nucleophile. Positions 222, 223, 296, 416, 418, 419, 435, 463, 465, 468, and 488 each coordinate substrate. Positions 336–499 (GSLVSGPSFT…SFEIETAFAS (164 aa)) are ABD. C401 and C439 are oxidised to a cystine.

The protein belongs to the glycosyl hydrolase 54 family.

It is found in the secreted. The enzyme catalyses Hydrolysis of terminal non-reducing alpha-L-arabinofuranoside residues in alpha-L-arabinosides.. It functions in the pathway glycan metabolism; L-arabinan degradation. Its function is as follows. Alpha-L-arabinofuranosidase involved in the degradation of arabinoxylan, a major component of plant hemicellulose. Able to hydrolyze 1,5-, 1,3- and 1,2-alpha-linkages not only in L-arabinofuranosyl oligosaccharides, but also in polysaccharides containing terminal non-reducing L-arabinofuranoses in side chains, like L-arabinan, arabinogalactan and arabinoxylan. The polypeptide is Probable alpha-L-arabinofuranosidase B (abfB) (Aspergillus awamori (Black koji mold)).